Here is a 368-residue protein sequence, read N- to C-terminus: Biglycan (368 aa).

The first 16 residues, 1 to 16 (MKVLLLLCSCILVIHA), serve as a signal peptide directing secretion. Positions 17–37 (LPFEQRGFWDFSMDDGMAMMK) are excised as a propeptide. Disulfide bonds link C63/C69 and C67/C76. LRR repeat units follow at residues 82–102 (TSIP…NNKI), 103–126 (TEIK…NNKI), 127–150 (SKIN…KNNL), 151–171 (EEIP…ENKI), 172–195 (KKVP…GNPL), 196–220 (ENGG…EAKL), 221–241 (SGIP…NNKI), 242–265 (QAIE…HNNI), 266–289 (RMIE…NNKL), 290–312 (SKVP…SNNI), 313–342 (TQVG…NNPV), and 343–368 (PYWE…NYRK). N270 and N311 each carry an N-linked (GlcNAc...) asparagine glycan. A disulfide bond links C321 and C354.

This sequence belongs to the small leucine-rich proteoglycan (SLRP) family. SLRP class I subfamily.

It is found in the secreted. Its subcellular location is the extracellular space. The protein localises to the extracellular matrix. May be involved in collagen fiber assembly. In Xenopus laevis (African clawed frog), this protein is Biglycan (bgn).